The following is a 225-amino-acid chain: Enolase-phosphatase E1 (225 aa).

It belongs to the HAD-like hydrolase superfamily. MasA/MtnC family. Monomer. Mg(2+) serves as cofactor.

It catalyses the reaction 5-methylsulfanyl-2,3-dioxopentyl phosphate + H2O = 1,2-dihydroxy-5-(methylsulfanyl)pent-1-en-3-one + phosphate. It participates in amino-acid biosynthesis; L-methionine biosynthesis via salvage pathway; L-methionine from S-methyl-5-thio-alpha-D-ribose 1-phosphate: step 3/6. The protein operates within amino-acid biosynthesis; L-methionine biosynthesis via salvage pathway; L-methionine from S-methyl-5-thio-alpha-D-ribose 1-phosphate: step 4/6. Bifunctional enzyme that catalyzes the enolization of 2,3-diketo-5-methylthiopentyl-1-phosphate (DK-MTP-1-P) into the intermediate 2-hydroxy-3-keto-5-methylthiopentenyl-1-phosphate (HK-MTPenyl-1-P), which is then dephosphorylated to form the acireductone 1,2-dihydroxy-3-keto-5-methylthiopentene (DHK-MTPene). The protein is Enolase-phosphatase E1 of Shewanella piezotolerans (strain WP3 / JCM 13877).